Consider the following 455-residue polypeptide: Kynurenine 3-monooxygenase (455 aa).

The next 2 helical transmembrane spans lie at 393 to 416 and 429 to 453; these read WLFRLFPTIWVPLYNSVSFTSMPY and LLWRTFLGFIVVGLGVTGSAIYWQR.

It belongs to the aromatic-ring hydroxylase family. KMO subfamily. FAD serves as cofactor.

The protein localises to the mitochondrion. It is found in the membrane. The enzyme catalyses L-kynurenine + NADPH + O2 + H(+) = 3-hydroxy-L-kynurenine + NADP(+) + H2O. It participates in cofactor biosynthesis; NAD(+) biosynthesis; quinolinate from L-kynurenine: step 1/3. Its function is as follows. Catalyzes the hydroxylation of L-kynurenine (L-Kyn) to form 3-hydroxy-L-kynurenine (L-3OHKyn). Required for synthesis of quinolinic acid. The protein is Kynurenine 3-monooxygenase of Drosophila willistoni (Fruit fly).